A 240-amino-acid chain; its full sequence is Protein CDV3 homolog A (240 aa).

Basic and acidic residues predominate over residues 1-15 (MAEPQEKSLDDFFAK). A disordered region spans residues 1–204 (MAEPQEKSLD…TESRREKEME (204 aa)). Alanine 2 carries the N-acetylalanine modification. Residues 27–52 (SGSAAGSRGSARPPDGAPSSSSSMSG) show a composition bias toward low complexity. Residues 57 to 73 (VKKEKSGKSDNPDQLQE) are compositionally biased toward basic and acidic residues. Polar residues-rich tracts occupy residues 127 to 141 (DKSSGPWNKTSQAQA) and 181 to 192 (SDTQFPSLQATA). A compositionally biased stretch (basic and acidic residues) spans 193-204 (KHTESRREKEME).

The protein belongs to the CDV3 family.

It is found in the cytoplasm. The polypeptide is Protein CDV3 homolog A (cdv3-a) (Xenopus laevis (African clawed frog)).